The primary structure comprises 140 residues: Large ribosomal subunit protein bL17 (140 aa).

The protein belongs to the bacterial ribosomal protein bL17 family. As to quaternary structure, part of the 50S ribosomal subunit. Contacts protein L32.

This Rhizobium leguminosarum bv. trifolii (strain WSM2304) protein is Large ribosomal subunit protein bL17.